Consider the following 237-residue polypeptide: UDP-Gal:alpha-D-GlcNAc-diphosphoundecaprenol beta-1,4-galactosyltransferase (237 aa).

Glu-101 (nucleophile) is an active-site residue.

The protein belongs to the glycosyltransferase 26 family. Mn(2+) serves as cofactor. It depends on Ni(2+) as a cofactor. Requires Pb(2+) as cofactor.

It catalyses the reaction N-acetyl-alpha-D-glucosaminyl-di-trans,octa-cis-undecaprenyl diphosphate + UDP-alpha-D-galactose = beta-D-Gal-(1-&gt;4)-alpha-D-GlcNAc-di-trans,octa-cis-undecaprenyl diphosphate + UDP + H(+). It participates in bacterial outer membrane biogenesis; LPS O-antigen biosynthesis. Galactosyltransferase that adds one galactose residue in the beta-1-4 linkage to GlcNAc-alpha-pyrophosphate-lipid in the biosynthesis of the O-polysaccharide repeating unit of the O antigen. This is UDP-Gal:alpha-D-GlcNAc-diphosphoundecaprenol beta-1,4-galactosyltransferase (wfeD) from Shigella boydii.